An 87-amino-acid polypeptide reads, in one-letter code: Small polypeptide ROTUNDIFOLIA LIKE 2 (87 aa).

The helical transmembrane segment at 19–35 (LIPHTSHYILQLVYLHL) threads the bilayer. The required for DVL/RTFL small polypeptide activity stretch occupies residues 56 to 87 (GQMGRLNRAFREKRARFYIFRRCVIMLLRWSD).

The protein belongs to the DVL/RTFL small polypeptides family.

It is found in the cell membrane. Functionally, small polypeptide acting as a regulatory molecule which coordinates cellular responses required for differentiation, growth and development, probably by restricting polar cell proliferation in lateral organs. This Oryza sativa subsp. japonica (Rice) protein is Small polypeptide ROTUNDIFOLIA LIKE 2.